A 225-amino-acid polypeptide reads, in one-letter code: Small ribosomal subunit protein uS2 (225 aa).

A compositionally biased stretch (basic and acidic residues) spans 1 to 13; the sequence is MAEAKPALEKEAA. Residues 1 to 33 form a disordered region; that stretch reads MAEAKPALEKEAAVKTGSIPSESEDETASHKEG.

The protein belongs to the universal ribosomal protein uS2 family.

This is Small ribosomal subunit protein uS2 from Methanosarcina acetivorans (strain ATCC 35395 / DSM 2834 / JCM 12185 / C2A).